The sequence spans 244 residues: Orotidine 5'-phosphate decarboxylase (244 aa).

Residues Asp10, Lys32, 59–68 (DLKLHDIPNT), Thr122, Arg184, Gln193, Gly213, and Arg214 contribute to the substrate site. The active-site Proton donor is Lys61.

It belongs to the OMP decarboxylase family. Type 1 subfamily. Homodimer.

The enzyme catalyses orotidine 5'-phosphate + H(+) = UMP + CO2. It functions in the pathway pyrimidine metabolism; UMP biosynthesis via de novo pathway; UMP from orotate: step 2/2. Catalyzes the decarboxylation of orotidine 5'-monophosphate (OMP) to uridine 5'-monophosphate (UMP). The chain is Orotidine 5'-phosphate decarboxylase from Geobacillus kaustophilus (strain HTA426).